The chain runs to 431 residues: Glucose-1-phosphate adenylyltransferase (431 aa).

Lysine 39 contacts beta-D-fructose 1,6-bisphosphate. 3 residues coordinate AMP: arginine 40, histidine 46, and arginine 52. Residue tyrosine 114 participates in alpha-D-glucose 1-phosphate binding. Arginine 130 contacts AMP. Alpha-D-glucose 1-phosphate contacts are provided by residues glycine 179, 194-195 (EK), and serine 212. An AMP-binding site is contributed by arginine 386. Beta-D-fructose 1,6-bisphosphate is bound at residue 429 to 431 (QER).

It belongs to the bacterial/plant glucose-1-phosphate adenylyltransferase family. In terms of assembly, homotetramer.

It carries out the reaction alpha-D-glucose 1-phosphate + ATP + H(+) = ADP-alpha-D-glucose + diphosphate. It participates in glycan biosynthesis; glycogen biosynthesis. Allosterically activated by fructose-1,6-bisphosphate (F16BP) and inhibited by AMP. Its function is as follows. Involved in the biosynthesis of ADP-glucose, a building block required for the elongation reactions to produce glycogen. Catalyzes the reaction between ATP and alpha-D-glucose 1-phosphate (G1P) to produce pyrophosphate and ADP-Glc. This Klebsiella pneumoniae (strain 342) protein is Glucose-1-phosphate adenylyltransferase.